The chain runs to 491 residues: Transmembrane protein 39B (491 aa).

Positions 1–56 (MAGGRRGANRTTYCRSPLSNDTGSVGNGNHSTSSPVTGVRSRTRNGSGTGMSSPPL) are disordered. N9, N20, N29, and N45 each carry an N-linked (GlcNAc...) asparagine glycan. Composition is skewed to polar residues over residues 9–36 (NRTTYCRSPLSNDTGSVGNGNHSTSSPV) and 44–56 (RNGSGTGMSSPPL). 8 consecutive transmembrane segments (helical) span residues 79–99 (LFELHLFACHLIALFVHYVNI), 115–135 (TSLNFHLIDYNMLVFTVIVLA), 152–172 (LSFPHSVFLVTARFAVLTLAG), 185–205 (TYSVLSLLFLCYPFGMYIPFF), 290–310 (EVLVSSMLSAYYVAFVPVWFV), 322–342 (CELFILVSVSTSVILMRHLLP), 423–443 (ILNILIILEGAMIFYQLYSLM), and 449–469 (HQTISLALILFSNYYAFFKLL).

The protein belongs to the TMEM39 family. In terms of tissue distribution, expressed in the ovary, followed by the intestine and brain.

The protein resides in the endoplasmic reticulum membrane. May protect the cells against DNA damage caused by exposure to the cold-warming stress and facilitates tissue damage repair during the recovery phase. The polypeptide is Transmembrane protein 39B (Danio rerio (Zebrafish)).